The chain runs to 93 residues: Ribonuclease P protein component 1 (93 aa).

Belongs to the eukaryotic/archaeal RNase P protein component 1 family. In terms of assembly, consists of a catalytic RNA component and at least 4-5 protein subunits.

It is found in the cytoplasm. It carries out the reaction Endonucleolytic cleavage of RNA, removing 5'-extranucleotides from tRNA precursor.. Part of ribonuclease P, a protein complex that generates mature tRNA molecules by cleaving their 5'-ends. This Methanosphaera stadtmanae (strain ATCC 43021 / DSM 3091 / JCM 11832 / MCB-3) protein is Ribonuclease P protein component 1.